Here is a 157-residue protein sequence, read N- to C-terminus: 2-C-methyl-D-erythritol 2,4-cyclodiphosphate synthase (157 aa).

A divalent metal cation-binding residues include D9 and H11. 4-CDP-2-C-methyl-D-erythritol 2-phosphate contacts are provided by residues 9–11 (DVH) and 35–36 (HS). H43 provides a ligand contact to a divalent metal cation. 4-CDP-2-C-methyl-D-erythritol 2-phosphate-binding positions include 57 to 59 (DIG), 62 to 66 (FPDTD), 101 to 107 (AEKPKMA), 133 to 136 (TTTE), F140, and R143.

Belongs to the IspF family. Homotrimer. Requires a divalent metal cation as cofactor.

The catalysed reaction is 4-CDP-2-C-methyl-D-erythritol 2-phosphate = 2-C-methyl-D-erythritol 2,4-cyclic diphosphate + CMP. It functions in the pathway isoprenoid biosynthesis; isopentenyl diphosphate biosynthesis via DXP pathway; isopentenyl diphosphate from 1-deoxy-D-xylulose 5-phosphate: step 4/6. Functionally, involved in the biosynthesis of isopentenyl diphosphate (IPP) and dimethylallyl diphosphate (DMAPP), two major building blocks of isoprenoid compounds. Catalyzes the conversion of 4-diphosphocytidyl-2-C-methyl-D-erythritol 2-phosphate (CDP-ME2P) to 2-C-methyl-D-erythritol 2,4-cyclodiphosphate (ME-CPP) with a corresponding release of cytidine 5-monophosphate (CMP). This Listeria innocua serovar 6a (strain ATCC BAA-680 / CLIP 11262) protein is 2-C-methyl-D-erythritol 2,4-cyclodiphosphate synthase.